A 23-amino-acid chain; its full sequence is QKCCTGKKGSCSGRACKNLRCCA.

Q1 carries the pyrrolidone carboxylic acid modification. 3 disulfide bridges follow: C3–C16, C4–C21, and C11–C22. The residue at position 23 (A23) is an Alanine amide.

It belongs to the conotoxin M superfamily. As to expression, expressed by the venom duct.

Its subcellular location is the secreted. Functionally, mu-conotoxins block voltage-gated sodium channels (Nav). The protein is Mu-conotoxin-like SxIIIB of Conus striolatus (Cone snail).